The sequence spans 185 residues: Glycine-rich cell wall structural protein 2 (185 aa).

An N-terminal signal peptide occupies residues 1–27 (MATTKHLALAILVLLSIGMTTSARTLL). The segment at 149-185 (GYGSGGGGGGGGGQGGGSGSGSGSGYGSGSGGGNGHH) is disordered.

The protein resides in the secreted. The protein localises to the cell wall. Responsible for plasticity of the cell wall. This is Glycine-rich cell wall structural protein 2 (GRP0.9) from Oryza sativa subsp. indica (Rice).